A 1224-amino-acid polypeptide reads, in one-letter code: DNA-directed RNA polymerase subunit beta' (1224 aa).

Cysteine 60, cysteine 62, cysteine 75, and cysteine 78 together coordinate Zn(2+). Aspartate 449, aspartate 451, and aspartate 453 together coordinate Mg(2+). 4 residues coordinate Zn(2+): cysteine 819, cysteine 893, cysteine 900, and cysteine 903.

Belongs to the RNA polymerase beta' chain family. In terms of assembly, the RNAP catalytic core consists of 2 alpha, 1 beta, 1 beta' and 1 omega subunit. When a sigma factor is associated with the core the holoenzyme is formed, which can initiate transcription. The cofactor is Mg(2+). Zn(2+) serves as cofactor.

The catalysed reaction is RNA(n) + a ribonucleoside 5'-triphosphate = RNA(n+1) + diphosphate. In terms of biological role, DNA-dependent RNA polymerase catalyzes the transcription of DNA into RNA using the four ribonucleoside triphosphates as substrates. This Lactobacillus johnsonii (strain CNCM I-12250 / La1 / NCC 533) protein is DNA-directed RNA polymerase subunit beta'.